A 271-amino-acid chain; its full sequence is MSSHADSKPWTVPALAQAKRDGRKLVMLTAYDAGFARTFDANGVDLILVGDSLGMVVQGHESTLPVTTADMVYHTAAVARVLERALLVADLSFQADATPERALDAATQLLQAGAEMVKIEGAGHKLDVIRYLVEREIPVCSHLGLTPQSVLRFGGYKVQGRGEAGEQLRRDAQAAVDAGASLIVLECVPTPIAAQISAELRVPTIGIGAGPGCDGQVLVMHDMLGLDSGHRRPKFVKDFLAEGGSVAGAVQAYAQAVRDGSFPDAEHAYAA.

2 residues coordinate Mg(2+): Asp51 and Asp90. Residues 51 to 52 (DS), Asp90, and Lys118 contribute to the 3-methyl-2-oxobutanoate site. A Mg(2+)-binding site is contributed by Glu120. The active-site Proton acceptor is the Glu186.

Belongs to the PanB family. As to quaternary structure, homodecamer; pentamer of dimers. Mg(2+) is required as a cofactor.

It is found in the cytoplasm. It carries out the reaction 3-methyl-2-oxobutanoate + (6R)-5,10-methylene-5,6,7,8-tetrahydrofolate + H2O = 2-dehydropantoate + (6S)-5,6,7,8-tetrahydrofolate. It participates in cofactor biosynthesis; (R)-pantothenate biosynthesis; (R)-pantoate from 3-methyl-2-oxobutanoate: step 1/2. Functionally, catalyzes the reversible reaction in which hydroxymethyl group from 5,10-methylenetetrahydrofolate is transferred onto alpha-ketoisovalerate to form ketopantoate. The protein is 3-methyl-2-oxobutanoate hydroxymethyltransferase of Xanthomonas campestris pv. campestris (strain 8004).